The chain runs to 838 residues: pre-rRNA 2'-O-ribose RNA methyltransferase FTSJ3 (838 aa).

Positions 56, 58, 76, 92, and 117 each coordinate S-adenosyl-L-methionine. The Proton acceptor role is filled by Lys157. The segment at 332–367 (ISLSSEEEEEGDEEEAVAETKQAPEEEEEREEEQLN) is disordered. 3 positions are modified to phosphoserine: Ser333, Ser335, and Ser336. Positions 336–348 (SEEEEEGDEEEAV) are enriched in acidic residues. Arg390 carries the post-translational modification Citrulline. The interval 453-482 (IYVSDAEDDDDTSLESDLDPEELAGVRTHS) is disordered. Positions 457 to 474 (DAEDDDDTSLESDLDPEE) are enriched in acidic residues. Phosphoserine occurs at positions 532 and 545. The segment at 537–639 (DADEALEISQ…GRGSKADEDG (103 aa)) is disordered. Residue Lys571 forms a Glycyl lysine isopeptide (Lys-Gly) (interchain with G-Cter in SUMO2) linkage. A Phosphoserine modification is found at Ser576. Glycyl lysine isopeptide (Lys-Gly) (interchain with G-Cter in SUMO2) cross-links involve residues Lys634 and Lys650. Ser667 carries the post-translational modification Phosphoserine. A Glycyl lysine isopeptide (Lys-Gly) (interchain with G-Cter in SUMO2) cross-link involves residue Lys669. A Phosphoserine modification is found at Ser679. Lys701 is covalently cross-linked (Glycyl lysine isopeptide (Lys-Gly) (interchain with G-Cter in SUMO2)). A coiled-coil region spans residues 730–768 (IKKVAEAKARKKRRVLKKLEQTKKKAEAVVNTVDISERE). The residue at position 774 (Arg774) is a Citrulline. The span at 802–812 (VRRPAGVKGHF) shows a compositional bias: basic residues. A disordered region spans residues 802–838 (VRRPAGVKGHFKVVDSRMKKDQRAQQRKEQKKKHKRK). Over residues 813–829 (KVVDSRMKKDQRAQQRK) the composition is skewed to basic and acidic residues.

It belongs to the class I-like SAM-binding methyltransferase superfamily. RNA methyltransferase RlmE family. SPB1 subfamily. As to quaternary structure, interacts with NIP7. In terms of processing, citrullinated by PADI4.

Its subcellular location is the nucleus. It is found in the nucleolus. The enzyme catalyses a ribonucleotide in rRNA + S-adenosyl-L-methionine = a 2'-O-methylribonucleotide in rRNA + S-adenosyl-L-homocysteine + H(+). Its function is as follows. RNA 2'-O-methyltransferase involved in the processing of the 34S pre-rRNA to 18S rRNA and in 40S ribosomal subunit formation. This chain is pre-rRNA 2'-O-ribose RNA methyltransferase FTSJ3 (Ftsj3), found in Mus musculus (Mouse).